A 335-amino-acid polypeptide reads, in one-letter code: Glycerol-3-phosphate dehydrogenase [NAD(P)+] (335 aa).

Residues W11, R30, and K106 each coordinate NADPH. Residues K106, G135, and S137 each coordinate sn-glycerol 3-phosphate. A139 serves as a coordination point for NADPH. Sn-glycerol 3-phosphate contacts are provided by K190, D243, S253, R254, and N255. The active-site Proton acceptor is the K190. R254 contacts NADPH. V278 and E280 together coordinate NADPH.

The protein belongs to the NAD-dependent glycerol-3-phosphate dehydrogenase family.

The protein resides in the cytoplasm. The catalysed reaction is sn-glycerol 3-phosphate + NAD(+) = dihydroxyacetone phosphate + NADH + H(+). It carries out the reaction sn-glycerol 3-phosphate + NADP(+) = dihydroxyacetone phosphate + NADPH + H(+). It functions in the pathway membrane lipid metabolism; glycerophospholipid metabolism. In terms of biological role, catalyzes the reduction of the glycolytic intermediate dihydroxyacetone phosphate (DHAP) to sn-glycerol 3-phosphate (G3P), the key precursor for phospholipid synthesis. In Paucimonas lemoignei (Pseudomonas lemoignei), this protein is Glycerol-3-phosphate dehydrogenase [NAD(P)+].